Here is a 208-residue protein sequence, read N- to C-terminus: ATP phosphoribosyltransferase (208 aa).

It belongs to the ATP phosphoribosyltransferase family. Short subfamily. Heteromultimer composed of HisG and HisZ subunits.

The protein resides in the cytoplasm. It catalyses the reaction 1-(5-phospho-beta-D-ribosyl)-ATP + diphosphate = 5-phospho-alpha-D-ribose 1-diphosphate + ATP. It functions in the pathway amino-acid biosynthesis; L-histidine biosynthesis; L-histidine from 5-phospho-alpha-D-ribose 1-diphosphate: step 1/9. Its function is as follows. Catalyzes the condensation of ATP and 5-phosphoribose 1-diphosphate to form N'-(5'-phosphoribosyl)-ATP (PR-ATP). Has a crucial role in the pathway because the rate of histidine biosynthesis seems to be controlled primarily by regulation of HisG enzymatic activity. The sequence is that of ATP phosphoribosyltransferase from Clostridioides difficile (strain 630) (Peptoclostridium difficile).